Here is a 211-residue protein sequence, read N- to C-terminus: Small ribosomal subunit protein uS3 (211 aa).

A KH type-2 domain is found at 16–85 (IDEYFKTKLV…NPQIEVKQVE (70 aa)).

The protein belongs to the universal ribosomal protein uS3 family. As to quaternary structure, part of the 30S ribosomal subunit.

Binds the lower part of the 30S subunit head. The chain is Small ribosomal subunit protein uS3 from Methanococcus maripaludis (strain DSM 14266 / JCM 13030 / NBRC 101832 / S2 / LL).